We begin with the raw amino-acid sequence, 522 residues long: Protein nucleotidyltransferase YdiU (522 aa).

Residues Gly109, Gly111, Arg112, Lys132, Asp144, Gly145, Arg195, and Arg202 each contribute to the ATP site. Asp271 acts as the Proton acceptor in catalysis. Mg(2+) contacts are provided by Asn272 and Asp281. Asp281 provides a ligand contact to ATP.

This sequence belongs to the SELO family. It depends on Mg(2+) as a cofactor. Requires Mn(2+) as cofactor.

It catalyses the reaction L-seryl-[protein] + ATP = 3-O-(5'-adenylyl)-L-seryl-[protein] + diphosphate. It carries out the reaction L-threonyl-[protein] + ATP = 3-O-(5'-adenylyl)-L-threonyl-[protein] + diphosphate. The catalysed reaction is L-tyrosyl-[protein] + ATP = O-(5'-adenylyl)-L-tyrosyl-[protein] + diphosphate. The enzyme catalyses L-histidyl-[protein] + UTP = N(tele)-(5'-uridylyl)-L-histidyl-[protein] + diphosphate. It catalyses the reaction L-seryl-[protein] + UTP = O-(5'-uridylyl)-L-seryl-[protein] + diphosphate. It carries out the reaction L-tyrosyl-[protein] + UTP = O-(5'-uridylyl)-L-tyrosyl-[protein] + diphosphate. In terms of biological role, nucleotidyltransferase involved in the post-translational modification of proteins. It can catalyze the addition of adenosine monophosphate (AMP) or uridine monophosphate (UMP) to a protein, resulting in modifications known as AMPylation and UMPylation. This is Protein nucleotidyltransferase YdiU from Burkholderia multivorans (strain ATCC 17616 / 249).